The primary structure comprises 362 residues: S-adenosylmethionine:tRNA ribosyltransferase-isomerase (362 aa).

Belongs to the QueA family. Monomer.

It is found in the cytoplasm. It catalyses the reaction 7-aminomethyl-7-carbaguanosine(34) in tRNA + S-adenosyl-L-methionine = epoxyqueuosine(34) in tRNA + adenine + L-methionine + 2 H(+). Its pathway is tRNA modification; tRNA-queuosine biosynthesis. Its function is as follows. Transfers and isomerizes the ribose moiety from AdoMet to the 7-aminomethyl group of 7-deazaguanine (preQ1-tRNA) to give epoxyqueuosine (oQ-tRNA). In Syntrophus aciditrophicus (strain SB), this protein is S-adenosylmethionine:tRNA ribosyltransferase-isomerase.